Reading from the N-terminus, the 186-residue chain is Single-stranded DNA-binding protein 1 (186 aa).

The region spanning 1-108 (MDATVTVVGN…LEIDEIGPTL (108 aa)) is the SSB domain. The tract at residues 119 to 186 (TQAGHGVSPD…EDFDSDEVPF (68 aa)) is disordered. Acidic residues predominate over residues 175-186 (SYEDFDSDEVPF).

As to quaternary structure, homotetramer.

This Tropheryma whipplei (strain Twist) (Whipple's bacillus) protein is Single-stranded DNA-binding protein 1 (ssb1).